Reading from the N-terminus, the 466-residue chain is Asparagine--tRNA ligase (466 aa).

It belongs to the class-II aminoacyl-tRNA synthetase family. In terms of assembly, homodimer.

It is found in the cytoplasm. It carries out the reaction tRNA(Asn) + L-asparagine + ATP = L-asparaginyl-tRNA(Asn) + AMP + diphosphate + H(+). The chain is Asparagine--tRNA ligase from Psychromonas ingrahamii (strain DSM 17664 / CCUG 51855 / 37).